Reading from the N-terminus, the 232-residue chain is Clarin-1 (232 aa).

A helical transmembrane segment spans residues 8–28 (IIFCMAGVLSFLCALGVVTAV). Residue asparagine 48 is glycosylated (N-linked (GlcNAc...) asparagine). The next 2 helical transmembrane spans lie at 101 to 121 (IILFSMILVVLTMVGTAFFMY) and 135 to 155 (LGLYLVSFISGSCGCLVMILF). An N-linked (GlcNAc...) asparagine glycan is attached at asparagine 184. The helical transmembrane segment at 186–206 (TTSFWVVFICFFVHFLNGLLI) threads the bilayer.

The protein belongs to the clarin family.

It is found in the cell membrane. Its function is as follows. May have a role in the excitatory ribbon synapse junctions between hair cells and cochlear ganglion cells and presumably also in analogous synapses within the retina. The sequence is that of Clarin-1 (Clrn1) from Mus musculus (Mouse).